The primary structure comprises 296 residues: Probable endonuclease 4 (296 aa).

Zn(2+) is bound by residues His69, His109, Glu160, Asp194, His197, His231, Asp244, His246, and Glu276.

This sequence belongs to the AP endonuclease 2 family. It depends on Zn(2+) as a cofactor.

It carries out the reaction Endonucleolytic cleavage to 5'-phosphooligonucleotide end-products.. Its function is as follows. Endonuclease IV plays a role in DNA repair. It cleaves phosphodiester bonds at apurinic or apyrimidinic (AP) sites, generating a 3'-hydroxyl group and a 5'-terminal sugar phosphate. This chain is Probable endonuclease 4, found in Sulfurovum sp. (strain NBC37-1).